A 182-amino-acid chain; its full sequence is MASIMMNKSVVLSKECAKPLATPKVTLNKRGFATTIATKNREMMVWQPFNNKMFETFSFLPPLTDEQISKQVDYILTNSWTPCLEFAASDQAYAGNENCIRMGPVASTYQDNRYWTMWKLPMFGCTDGSQVLSEIQACTKAFPDAYIRLVCFDANRQVQISGFLVHRPPSATDYRLPADRQV.

Residues 1–42 (MASIMMNKSVVLSKECAKPLATPKVTLNKRGFATTIATKNRE) constitute a chloroplast transit peptide.

Belongs to the RuBisCO small chain family. As to quaternary structure, heterohexadecamer of 8 large and 8 small subunits.

It localises to the plastid. Its subcellular location is the chloroplast. Functionally, ruBisCO catalyzes two reactions: the carboxylation of D-ribulose 1,5-bisphosphate, the primary event in carbon dioxide fixation, as well as the oxidative fragmentation of the pentose substrate. Both reactions occur simultaneously and in competition at the same active site. Although the small subunit is not catalytic it is essential for maximal activity. This is Ribulose bisphosphate carboxylase small subunit, chloroplastic 1 from Acetabularia acetabulum (Mermaid's wine glass).